The sequence spans 569 residues: AsmA family protein YicH (569 aa).

Topologically, residues 1-6 (MKFIGK) are cytoplasmic. Residues 7-27 (LLLYILIALLVAIAGLYFLLQ) traverse the membrane as a helical segment. Topologically, residues 28–569 (TRWGAEHISA…GEVTSTEPVR (542 aa)) are periplasmic.

It belongs to the AsmA family.

It localises to the cell inner membrane. This Escherichia coli (strain K12) protein is AsmA family protein YicH (yicH).